The following is a 337-amino-acid chain: Glycerol-3-phosphate dehydrogenase [NAD(P)+] (337 aa).

S12, W13, and K110 together coordinate NADPH. The sn-glycerol 3-phosphate site is built by K110, G141, and S143. A145 contributes to the NADPH binding site. Sn-glycerol 3-phosphate contacts are provided by K196, D249, S259, R260, and N261. Catalysis depends on K196, which acts as the Proton acceptor. Residue R260 participates in NADPH binding. Residues V284 and E286 each contribute to the NADPH site.

Belongs to the NAD-dependent glycerol-3-phosphate dehydrogenase family.

It is found in the cytoplasm. The catalysed reaction is sn-glycerol 3-phosphate + NAD(+) = dihydroxyacetone phosphate + NADH + H(+). The enzyme catalyses sn-glycerol 3-phosphate + NADP(+) = dihydroxyacetone phosphate + NADPH + H(+). The protein operates within membrane lipid metabolism; glycerophospholipid metabolism. Its function is as follows. Catalyzes the reduction of the glycolytic intermediate dihydroxyacetone phosphate (DHAP) to sn-glycerol 3-phosphate (G3P), the key precursor for phospholipid synthesis. The sequence is that of Glycerol-3-phosphate dehydrogenase [NAD(P)+] from Levilactobacillus brevis (strain ATCC 367 / BCRC 12310 / CIP 105137 / JCM 1170 / LMG 11437 / NCIMB 947 / NCTC 947) (Lactobacillus brevis).